The following is a 942-amino-acid chain: UvrABC system protein A (942 aa).

31–38 lines the ATP pocket; it reads GLSGSGKS. The C4-type zinc-finger motif lies at 253–280; that stretch reads CSECGYSLPELEPRLFSFNNPAGACPTC. 2 consecutive ABC transporter domains span residues 310–586 and 606–936; these read WDRR…EASI and YDAN…RFLT. ATP is bound at residue 639–646; that stretch reads GVSGSGKS. The segment at 739-765 adopts a C4-type zinc-finger fold; that stretch reads CEACQGDGVIKVEMHFLPDVYVPCDHC.

Belongs to the ABC transporter superfamily. UvrA family. Forms a heterotetramer with UvrB during the search for lesions.

Its subcellular location is the cytoplasm. In terms of biological role, the UvrABC repair system catalyzes the recognition and processing of DNA lesions. UvrA is an ATPase and a DNA-binding protein. A damage recognition complex composed of 2 UvrA and 2 UvrB subunits scans DNA for abnormalities. When the presence of a lesion has been verified by UvrB, the UvrA molecules dissociate. The polypeptide is UvrABC system protein A (Haemophilus ducreyi (strain 35000HP / ATCC 700724)).